A 50-amino-acid polypeptide reads, in one-letter code: Photosystem II reaction center protein K (50 aa).

The propeptide occupies 1 to 13 (MLNLNFTNITVMG). A helical transmembrane segment spans residues 25–45 (IVDILPIIPILFFLLAFVWQA).

It belongs to the PsbK family. In terms of assembly, PSII is composed of 1 copy each of membrane proteins PsbA, PsbB, PsbC, PsbD, PsbE, PsbF, PsbH, PsbI, PsbJ, PsbK, PsbL, PsbM, PsbT, PsbY, PsbZ, Psb30/Ycf12, at least 3 peripheral proteins of the oxygen-evolving complex and a large number of cofactors. It forms dimeric complexes.

The protein localises to the plastid. The protein resides in the chloroplast thylakoid membrane. Functionally, one of the components of the core complex of photosystem II (PSII). PSII is a light-driven water:plastoquinone oxidoreductase that uses light energy to abstract electrons from H(2)O, generating O(2) and a proton gradient subsequently used for ATP formation. It consists of a core antenna complex that captures photons, and an electron transfer chain that converts photonic excitation into a charge separation. This Euglena myxocylindracea protein is Photosystem II reaction center protein K.